The sequence spans 232 residues: Probable metallo-hydrolase M6_Spy0554 (232 aa).

Positions 75, 77, 79, 80, 155, 174, and 215 each coordinate Zn(2+).

It depends on Zn(2+) as a cofactor.

The polypeptide is Probable metallo-hydrolase M6_Spy0554 (Streptococcus pyogenes serotype M6 (strain ATCC BAA-946 / MGAS10394)).